A 469-amino-acid chain; its full sequence is CBL-interacting serine/threonine-protein kinase 16 (469 aa).

The Protein kinase domain occupies 15-278 (YNIGRLLGTG…MSEIKMIPWF (264 aa)). ATP contacts are provided by residues 21–29 (LGTGNFAKV) and K44. D139 acts as the Proton acceptor in catalysis. The tract at residues 157 to 193 (DFGLSALMMPEGLGGRRGSSDDLLHTRCGTPAYVAPE) is activation loop. A Phosphoserine modification is found at S161. Phosphothreonine is present on T182. Positions 290-320 (IDETIPSPPEPPTKKKKKDLNEKEDDGASPR) are disordered. An NAF domain is found at 317–342 (ASPRSFNAFQFITSMSSGFDLSNLFE). A PPI region spans residues 346–376 (KPKRMFTSKFPAKSVKERLETAAREMDMRVK). The segment at 447–469 (DDEDDVTTNDNVDTNDNKINNVS) is disordered. The span at 454–469 (TNDNVDTNDNKINNVS) shows a compositional bias: low complexity.

It belongs to the protein kinase superfamily. CAMK Ser/Thr protein kinase family. SNF1 subfamily. In terms of assembly, part of a K(+)-channel calcium-sensing kinase/phosphatase complex composed by a calcium sensor CBL (CBL1, CBL2, CBL3 or CBL9), a kinase CIPK (CIPK6, CIPK16 or CIPK23), a phosphatase PP2C (AIP1) and a K(+)-channel (AKT1). Interacts with AKT1, CBL1, CBL2, CBL3 and CBL9. Mn(2+) serves as cofactor.

The enzyme catalyses L-seryl-[protein] + ATP = O-phospho-L-seryl-[protein] + ADP + H(+). The catalysed reaction is L-threonyl-[protein] + ATP = O-phospho-L-threonyl-[protein] + ADP + H(+). In terms of biological role, CIPK serine-threonine protein kinases interact with CBL proteins. Binding of a CBL protein to the regulatory NAF domain of CIPK protein lead to the activation of the kinase in a calcium-dependent manner. Downstream of CBL1, CBL2, CBL3 and CBL9, regulates by phosphorylation the K(+) conductance and uptake of AKT1. The polypeptide is CBL-interacting serine/threonine-protein kinase 16 (CIPK16) (Arabidopsis thaliana (Mouse-ear cress)).